The chain runs to 120 residues: Non-specific lipid-transfer protein 2 (120 aa).

The N-terminal stretch at 1–25 (MATSMKLACVALVMCMVVIAPMAEA) is a signal peptide. Disulfide bonds link cysteine 29-cysteine 78, cysteine 39-cysteine 55, cysteine 56-cysteine 101, and cysteine 76-cysteine 115.

This sequence belongs to the plant LTP family. In terms of tissue distribution, expressed in roots, stem, leaves and tendrils of the mature plant.

In terms of biological role, plant non-specific lipid-transfer proteins transfer phospholipids as well as galactolipids across membranes. May play a role in wax or cutin deposition in the cell walls of expanding epidermal cells and certain secretory tissues. The polypeptide is Non-specific lipid-transfer protein 2 (Pisum sativum (Garden pea)).